Reading from the N-terminus, the 441-residue chain is Ribulose bisphosphate carboxylase large chain (441 aa).

Asn89 and Thr139 together coordinate substrate. Catalysis depends on Lys141, which acts as the Proton acceptor. Lys143 is a binding site for substrate. Positions 167, 169, and 170 each coordinate Mg(2+). Lys167 carries the N6-carboxylysine modification. The active-site Proton acceptor is His260. Arg261, His293, and Ser345 together coordinate substrate.

It belongs to the RuBisCO large chain family. Type I subfamily. As to quaternary structure, heterohexadecamer of 8 large chains and 8 small chains; disulfide-linked. The disulfide link is formed within the large subunit homodimers. It depends on Mg(2+) as a cofactor. In terms of processing, the disulfide bond which can form in the large chain dimeric partners within the hexadecamer appears to be associated with oxidative stress and protein turnover.

It localises to the plastid. It is found in the chloroplast. It catalyses the reaction 2 (2R)-3-phosphoglycerate + 2 H(+) = D-ribulose 1,5-bisphosphate + CO2 + H2O. It carries out the reaction D-ribulose 1,5-bisphosphate + O2 = 2-phosphoglycolate + (2R)-3-phosphoglycerate + 2 H(+). In terms of biological role, ruBisCO catalyzes two reactions: the carboxylation of D-ribulose 1,5-bisphosphate, the primary event in carbon dioxide fixation, as well as the oxidative fragmentation of the pentose substrate in the photorespiration process. Both reactions occur simultaneously and in competition at the same active site. This chain is Ribulose bisphosphate carboxylase large chain, found in Coriandrum sativum (Coriander).